We begin with the raw amino-acid sequence, 597 residues long: Aspartate--tRNA(Asp/Asn) ligase (597 aa).

Glu175 lines the L-aspartate pocket. The tract at residues Gln199–Lys202 is aspartate. 2 residues coordinate L-aspartate: Arg221 and His456. Arg221–Glu223 lines the ATP pocket. Glu490 contributes to the ATP binding site. Arg497 contributes to the L-aspartate binding site. Gly542 to Arg545 is a binding site for ATP.

The protein belongs to the class-II aminoacyl-tRNA synthetase family. Type 1 subfamily. As to quaternary structure, homodimer.

The protein localises to the cytoplasm. The enzyme catalyses tRNA(Asx) + L-aspartate + ATP = L-aspartyl-tRNA(Asx) + AMP + diphosphate. Its function is as follows. Aspartyl-tRNA synthetase with relaxed tRNA specificity since it is able to aspartylate not only its cognate tRNA(Asp) but also tRNA(Asn). Reaction proceeds in two steps: L-aspartate is first activated by ATP to form Asp-AMP and then transferred to the acceptor end of tRNA(Asp/Asn). This Beijerinckia indica subsp. indica (strain ATCC 9039 / DSM 1715 / NCIMB 8712) protein is Aspartate--tRNA(Asp/Asn) ligase.